A 770-amino-acid chain; its full sequence is MAYGWWRRRRRRWRRWRRRPWRRRWRTRRRRPARRRGRRRNVRRRRRGGRWRRRYRRWKRKGRRRKKAKIIIRQWQPNYRRRCNIVGYIPVLICGENTVSRNYATHSDDTNYPGPFGGGMTTDKFTLRILYDEYKRFMNYWTASNEDLDLCRYLGVNLYFFRHPDVDFIIKINTMPPFLDTELTAPSIHPGMLALDKRARWIPSLKSRPGKKHYIKIRVEAPKMFTDKWYPQTDLCDMVLLTVYATTADMQYPFGSPLTDSVVVNFQVLQSMYDQNISILPTEKSKRTQLHDNITRYTPFYNTTQTIAQLKPFVDAGNVTPVSPTTTWGSYINTTKFTTTATTTYTYPGTTTTTVTMLTCNDSWYRGTVYNNQISQLPKKAAEFYSKATKTLLGDTFTTEDYTLEYHGGLYSSIWLSAGRSYFETPGVYTDIKYNPFTDRGEGNMLWIDWLSKKNMNYDKVQSKCLISDLPLWAAAYGYVEFCAKSTGDQNIHMNAKLLIRSPFTDPQLLVHTDPTKGFVPYSLNFGNGKMPGGSSNVPIRMRAKWYPTLFHQQEVLEALAQSGPFAYHSDIKKVSLGMKYRFKWIWGGNPVRQQVVRNPCKETHSSGNRVPRSLQIVDPKYNSPELTFHTWDFRRGLFGPKAIQRMQQQPTTTDIFSAGRKRPRRDTEVYHSSQEGEQKESLLFLPVKLLRRVPPWEDSQQEESGSQSSEEETQTVSQQLKQQLQQQRILGVKLRLLFNQVQKIQQNQDINPTLLPRGGDLASLFQIAP.

Residues 647–656 (MQQQPTTTDI) show a composition bias toward polar residues. Disordered regions lie at residues 647 to 678 (MQQQPTTTDIFSAGRKRPRRDTEVYHSSQEGE) and 697 to 717 (WEDSQQEESGSQSSEEETQTV). Basic and acidic residues predominate over residues 666-678 (RDTEVYHSSQEGE). Over residues 703-717 (EESGSQSSEEETQTV) the composition is skewed to low complexity.

The protein belongs to the anelloviridae capsid protein family.

It is found in the virion. In terms of biological role, self assemble to form an icosahedral capsid. This chain is Capsid protein, found in Torque teno virus (isolate Human/Japan/TRM1/1999) (TTV).